Reading from the N-terminus, the 169-residue chain is Zinc metalloproteinase-disintegrin-like mikarin (169 aa).

The 44-residue stretch at 14 to 57 folds into the Peptidase M12B domain; it reads KYLEYVVVDNNMYRNYGNAGPCVMSAEISFEPLQEFSSCDIQEP. The region spanning 65–129 is the Disintegrin domain; sequence PAVCGNYYVE…PEICTGRSAK (65 aa). Disulfide bonds link Cys68-Cys97, Cys79-Cys92, Cys81-Cys87, Cys105-Cys111, Cys110-Cys123, and Cys150-Cys161. Residues 116–118 carry the D/ECD-tripeptide motif; that stretch reads DCD.

The protein belongs to the venom metalloproteinase (M12B) family. P-III subfamily. P-IIIa sub-subfamily. As to quaternary structure, monomer. Zn(2+) serves as cofactor. Expressed by the venom gland.

The protein resides in the secreted. With respect to regulation, inhibited by EDTA, but not by PMSF. Its function is as follows. Snake venom zinc metalloproteinase that calcium-independently catalyzes the conversion of prothrombin (F2) to alpha-thrombin through the formation of a thrombin intermediate. This is Zinc metalloproteinase-disintegrin-like mikarin from Micropechis ikaheca (New Guinean small-eyed snake).